A 128-amino-acid chain; its full sequence is Small ribosomal subunit protein uS11 (128 aa).

This sequence belongs to the universal ribosomal protein uS11 family. As to quaternary structure, part of the 30S ribosomal subunit. Interacts with proteins S7 and S18. Binds to IF-3.

Functionally, located on the platform of the 30S subunit, it bridges several disparate RNA helices of the 16S rRNA. Forms part of the Shine-Dalgarno cleft in the 70S ribosome. The sequence is that of Small ribosomal subunit protein uS11 from Chloroherpeton thalassium (strain ATCC 35110 / GB-78).